A 210-amino-acid chain; its full sequence is Somatotropin-1 (210 aa).

A signal peptide spans 1–22 (MARALVLLSVVLVSLLVNQGRA). Residue histidine 38 coordinates Zn(2+). Cysteine 71 and cysteine 183 are disulfide-bonded. Glutamate 192 contributes to the Zn(2+) binding site. A disulfide bridge links cysteine 200 with cysteine 208.

This sequence belongs to the somatotropin/prolactin family.

The protein localises to the secreted. Its function is as follows. Growth hormone plays an important role in growth control and is involved in the regulation of several anabolic processes. Implicated as an osmoregulatory substance important for seawater adaptation. In Carassius auratus (Goldfish), this protein is Somatotropin-1 (gh1).